A 164-amino-acid chain; its full sequence is 17.8 kDa class II heat shock protein (164 aa).

The 117-residue stretch at 48 to 164 (DARAMAATPA…KPKTIEVKVA (117 aa)) folds into the sHSP domain.

This sequence belongs to the small heat shock protein (HSP20) family.

It is found in the cytoplasm. The polypeptide is 17.8 kDa class II heat shock protein (Zea mays (Maize)).